The following is a 1230-amino-acid chain: Cullin-associated NEDD8-dissociated protein 1 (1230 aa).

Residue Ala-2 is modified to N-acetylalanine. 12 HEAT repeats span residues 2-39, 44-81, 83-119, 131-165, 171-208, 210-247, 248-282, 289-366, 370-407, 424-467, 471-510, and 515-552; these read ASAS…KDSI, DSER…KVKE, QVET…ELPP, CKKI…LSRQ, NFHP…SCGN, VFVD…QAGH, RIGE…FESF, EVYP…TRHE, EFYK…QTRP, PLTM…VLPG, QHIP…NHSP, and PHVQ…VIRP. Lys-55 bears the N6-acetyllysine mark. A disordered region spans residues 315 to 344; the sequence is DEDEDENAMDADGGDDDDQGSDDEYSDDDD. The residue at position 335 (Ser-335) is a Phosphoserine. Position 558 is a phosphoserine (Ser-558). 15 HEAT repeats span residues 563–602, 606–643, 646–683, 688–725, 729–768, 770–808, 809–845, 852–889, 890–927, 928–960, 961–998, 1002–1039, 1043–1097, 1099–1133, and 1140–1189; these read PYIK…NLGD, PDLS…LKID, PVLG…NYSD, AMID…VYPS, KISG…TGTN, LGYM…ALTR, ACPK…LGEV, SGQL…GNLP, EYLP…GLKP, YVEN…KLTL, IDPE…DHPQ, PLLK…NKPS, DLLD…DSCL, RLDI…LSTL, and QRLD…IPEA. Lys-971 carries the N6-acetyllysine modification.

This sequence belongs to the CAND family. Interacts with TBP. Part of a complex that contains CUL1 and RBX1. Interacts with unneddylated cullins: interacts with CUL1, CUL2, CUL3, CUL4A, CUL4B and CUL5. Does not bind neddylated CUL1. Interaction with cullins is abolished in presence of COMMD1, which antagonizes with CAND1 for interacting with cullins. Interacts with ERCC6. Interacts with DCUN1D1, DCUN1D2, DCUN1D3, DCUN1D4 and DCUN1D5; these interactions are bridged by cullins and strongly inhibits the neddylation of cullins. In terms of tissue distribution, detected in heart, brain, spleen, liver, skeletal muscle, kidney and testis.

It is found in the cytoplasm. It localises to the nucleus. In terms of biological role, key assembly factor of SCF (SKP1-CUL1-F-box protein) E3 ubiquitin ligase complexes that promotes the exchange of the substrate-recognition F-box subunit in SCF complexes, thereby playing a key role in the cellular repertoire of SCF complexes. Acts as a F-box protein exchange factor. The exchange activity of CAND1 is coupled with cycles of neddylation conjugation: in the deneddylated state, cullin-binding CAND1 binds CUL1-RBX1, increasing dissociation of the SCF complex and promoting exchange of the F-box protein. Probably plays a similar role in other cullin-RING E3 ubiquitin ligase complexes. May indirectly enhance transcription from various types of promoters. The polypeptide is Cullin-associated NEDD8-dissociated protein 1 (Cand1) (Rattus norvegicus (Rat)).